Consider the following 583-residue polypeptide: CTP synthase (583 aa).

Residues methionine 1–leucine 278 are amidoligase domain. Serine 20 is a binding site for CTP. A UTP-binding site is contributed by serine 20. ATP contacts are provided by residues serine 21–leucine 26 and aspartate 78. Mg(2+) contacts are provided by aspartate 78 and glutamate 152. Residues aspartate 159–glutamate 161, lysine 199–glutamine 204, and lysine 235 contribute to the CTP site. Residues lysine 199–glutamine 204 and lysine 235 contribute to the UTP site. The Glutamine amidotransferase type-1 domain maps to arginine 303 to glycine 551. Glycine 366 is an L-glutamine binding site. Cysteine 393 acts as the Nucleophile; for glutamine hydrolysis in catalysis. L-glutamine-binding positions include leucine 394–glutamine 397, glutamate 416, and arginine 477. Residues histidine 524 and glutamate 526 contribute to the active site. Residues proline 559 to glycine 583 are disordered.

The protein belongs to the CTP synthase family. As to quaternary structure, homotetramer.

The catalysed reaction is UTP + L-glutamine + ATP + H2O = CTP + L-glutamate + ADP + phosphate + 2 H(+). It catalyses the reaction L-glutamine + H2O = L-glutamate + NH4(+). It carries out the reaction UTP + NH4(+) + ATP = CTP + ADP + phosphate + 2 H(+). The protein operates within pyrimidine metabolism; CTP biosynthesis via de novo pathway; CTP from UDP: step 2/2. Its activity is regulated as follows. Allosterically activated by GTP, when glutamine is the substrate; GTP has no effect on the reaction when ammonia is the substrate. The allosteric effector GTP functions by stabilizing the protein conformation that binds the tetrahedral intermediate(s) formed during glutamine hydrolysis. Inhibited by the product CTP, via allosteric rather than competitive inhibition. In terms of biological role, catalyzes the ATP-dependent amination of UTP to CTP with either L-glutamine or ammonia as the source of nitrogen. Regulates intracellular CTP levels through interactions with the four ribonucleotide triphosphates. In Mycobacterium ulcerans (strain Agy99), this protein is CTP synthase.